A 309-amino-acid polypeptide reads, in one-letter code: DSC E3 ubiquitin ligase complex subunit C (309 aa).

The N-linked (GlcNAc...) asparagine glycan is linked to N61. Disordered regions lie at residues 88–110 (LPPS…GKGK) and 148–177 (EQAD…FDRL). Helical transmembrane passes span 257–277 (DDML…AMWL) and 289–309 (GLAV…RIMN).

This sequence belongs to the dsc3 family. In terms of assembly, component of the DSC E3 ubiquitin ligase complex composed of dscA, dscB, dscC and dscD.

The protein resides in the endoplasmic reticulum membrane. It functions in the pathway protein modification; protein ubiquitination. In terms of biological role, component of the DSC E3 ubiquitin ligase complex which is required for the srbA transcriptional activator proteolytic cleavage to release the soluble transcription factor from the membrane in low oxygen or sterol conditions. Required for growth during hypoxia and triazole drug susceptibility, as well as for virulence in a murine model of invasive pulmonary aspergillosis (IPA). The protein is DSC E3 ubiquitin ligase complex subunit C of Aspergillus fumigatus (strain CBS 144.89 / FGSC A1163 / CEA10) (Neosartorya fumigata).